Reading from the N-terminus, the 715-residue chain is Fatty acid oxidation complex subunit alpha (715 aa).

The segment at 1–190 is enoyl-CoA hydratase/isomerase; that stretch reads MIYEGKAITV…KVSAVDAVVT (190 aa). Asp297 lines the substrate pocket. Residues 312-715 are 3-hydroxyacyl-CoA dehydrogenase; the sequence is KDVKQAAVLG…MAKNGQSFFG (404 aa). NAD(+) is bound by residues Met325, Asp344, 401 to 403, Lys408, and Ser430; that span reads VVE. The For 3-hydroxyacyl-CoA dehydrogenase activity role is filled by His451. Asn454 contacts NAD(+). 2 residues coordinate substrate: Asn501 and Tyr660.

This sequence in the N-terminal section; belongs to the enoyl-CoA hydratase/isomerase family. It in the C-terminal section; belongs to the 3-hydroxyacyl-CoA dehydrogenase family. As to quaternary structure, heterotetramer of two alpha chains (FadB) and two beta chains (FadA).

It catalyses the reaction a (3S)-3-hydroxyacyl-CoA + NAD(+) = a 3-oxoacyl-CoA + NADH + H(+). The catalysed reaction is a (3S)-3-hydroxyacyl-CoA = a (2E)-enoyl-CoA + H2O. It carries out the reaction a 4-saturated-(3S)-3-hydroxyacyl-CoA = a (3E)-enoyl-CoA + H2O. The enzyme catalyses (3S)-3-hydroxybutanoyl-CoA = (3R)-3-hydroxybutanoyl-CoA. It catalyses the reaction a (3Z)-enoyl-CoA = a 4-saturated (2E)-enoyl-CoA. The catalysed reaction is a (3E)-enoyl-CoA = a 4-saturated (2E)-enoyl-CoA. Its pathway is lipid metabolism; fatty acid beta-oxidation. In terms of biological role, involved in the aerobic and anaerobic degradation of long-chain fatty acids via beta-oxidation cycle. Catalyzes the formation of 3-oxoacyl-CoA from enoyl-CoA via L-3-hydroxyacyl-CoA. It can also use D-3-hydroxyacyl-CoA and cis-3-enoyl-CoA as substrate. This is Fatty acid oxidation complex subunit alpha from Pseudomonas fragi.